Here is a 259-residue protein sequence, read N- to C-terminus: uncharacterized protein (259 aa).

The signal sequence occupies residues Met-1–Ala-28. The next 2 helical transmembrane spans lie at Glu-32–Ala-52 and Trp-191–Thr-211.

It localises to the cell membrane. This is an uncharacterized protein from Coxiella burnetii (strain RSA 493 / Nine Mile phase I).